A 201-amino-acid chain; its full sequence is Ribosome maturation factor RimP (201 aa).

Residues 180 to 201 form a disordered region; the sequence is LRRGSAPAQDEEGEDEAPGAPL. Residues 188–201 are compositionally biased toward acidic residues; the sequence is QDEEGEDEAPGAPL.

Belongs to the RimP family.

The protein resides in the cytoplasm. In terms of biological role, required for maturation of 30S ribosomal subunits. The protein is Ribosome maturation factor RimP of Methylobacterium sp. (strain 4-46).